A 509-amino-acid chain; its full sequence is Maturase K (509 aa).

This sequence belongs to the intron maturase 2 family. MatK subfamily.

Its subcellular location is the plastid. It is found in the chloroplast. Its function is as follows. Usually encoded in the trnK tRNA gene intron. Probably assists in splicing its own and other chloroplast group II introns. The protein is Maturase K of Thuja occidentalis (Northern white-cedar).